We begin with the raw amino-acid sequence, 417 residues long: Dihydrolipoyllysine-residue succinyltransferase component of 2-oxoglutarate dehydrogenase complex (417 aa).

The Lipoyl-binding domain maps to 1-76; that stretch reads MAEIKVPELA…QVGEIIGTIS (76 aa). Position 42 is an N6-lipoyllysine (Lys42). The disordered stretch occupies residues 75–191; it reads ISEGAGESSA…SFDKPVEVQK (117 aa). Composition is skewed to basic and acidic residues over residues 89 to 103 and 152 to 163; these read EKTE…EKQA and RKQDVEAYEKPA. Positions 123-160 constitute a Peripheral subunit-binding (PSBD) domain; the sequence is IASPSARKLAREKGIDLSQVPTGDPLGRVRKQDVEAYE. Low complexity predominate over residues 164–182; it reads SKPAPQQKQQPQAQKAQQS. Active-site residues include His388 and Asp392.

It belongs to the 2-oxoacid dehydrogenase family. As to quaternary structure, forms a 24-polypeptide structural core with octahedral symmetry. Part of the 2-oxoglutarate dehydrogenase (OGDH) complex composed of E1 (2-oxoglutarate dehydrogenase), E2 (dihydrolipoamide succinyltransferase) and E3 (dihydrolipoamide dehydrogenase); the complex contains multiple copies of the three enzymatic components (E1, E2 and E3). (R)-lipoate serves as cofactor.

It catalyses the reaction N(6)-[(R)-dihydrolipoyl]-L-lysyl-[protein] + succinyl-CoA = N(6)-[(R)-S(8)-succinyldihydrolipoyl]-L-lysyl-[protein] + CoA. Its pathway is amino-acid degradation; L-lysine degradation via saccharopine pathway; glutaryl-CoA from L-lysine: step 6/6. In terms of biological role, E2 component of the 2-oxoglutarate dehydrogenase (OGDH) complex which catalyzes the second step in the conversion of 2-oxoglutarate to succinyl-CoA and CO(2). This chain is Dihydrolipoyllysine-residue succinyltransferase component of 2-oxoglutarate dehydrogenase complex (odhB), found in Bacillus subtilis (strain 168).